An 81-amino-acid polypeptide reads, in one-letter code: Cytochrome b559 subunit alpha (81 aa).

Residues 21 to 35 (IIHSITIPMLFIAGW) traverse the membrane as a helical segment. Histidine 23 is a binding site for heme.

It belongs to the PsbE/PsbF family. As to quaternary structure, heterodimer of an alpha subunit and a beta subunit. PSII is composed of 1 copy each of membrane proteins PsbA, PsbB, PsbC, PsbD, PsbE, PsbF, PsbH, PsbI, PsbJ, PsbK, PsbL, PsbM, PsbT, PsbX, PsbY, PsbZ, Psb30/Ycf12, peripheral proteins PsbO, CyanoQ (PsbQ), PsbU, PsbV and a large number of cofactors. It forms dimeric complexes. Heme b is required as a cofactor.

It is found in the cellular thylakoid membrane. Its function is as follows. This b-type cytochrome is tightly associated with the reaction center of photosystem II (PSII). PSII is a light-driven water:plastoquinone oxidoreductase that uses light energy to abstract electrons from H(2)O, generating O(2) and a proton gradient subsequently used for ATP formation. It consists of a core antenna complex that captures photons, and an electron transfer chain that converts photonic excitation into a charge separation. This chain is Cytochrome b559 subunit alpha, found in Microcystis aeruginosa (strain NIES-843 / IAM M-2473).